The sequence spans 361 residues: Phospho-N-acetylmuramoyl-pentapeptide-transferase (361 aa).

10 helical membrane-spanning segments follow: residues 25-45 (TGGA…WIID), 72-92 (TPTM…LLWA), 95-115 (LNPY…VGFY), 135-155 (LLIE…LGRA), 169-189 (VMLN…VGAG), 200-220 (GLAI…SYLA), 240-260 (LAVL…FNAP), 264-284 (IFMG…IAVA), 289-309 (IVLA…IVQV), and 338-358 (QIVI…LSTL).

It belongs to the glycosyltransferase 4 family. MraY subfamily. Mg(2+) is required as a cofactor.

It is found in the cell inner membrane. It catalyses the reaction UDP-N-acetyl-alpha-D-muramoyl-L-alanyl-gamma-D-glutamyl-meso-2,6-diaminopimeloyl-D-alanyl-D-alanine + di-trans,octa-cis-undecaprenyl phosphate = di-trans,octa-cis-undecaprenyl diphospho-N-acetyl-alpha-D-muramoyl-L-alanyl-D-glutamyl-meso-2,6-diaminopimeloyl-D-alanyl-D-alanine + UMP. Its pathway is cell wall biogenesis; peptidoglycan biosynthesis. Its function is as follows. Catalyzes the initial step of the lipid cycle reactions in the biosynthesis of the cell wall peptidoglycan: transfers peptidoglycan precursor phospho-MurNAc-pentapeptide from UDP-MurNAc-pentapeptide onto the lipid carrier undecaprenyl phosphate, yielding undecaprenyl-pyrophosphoryl-MurNAc-pentapeptide, known as lipid I. In Rhodopseudomonas palustris (strain ATCC BAA-98 / CGA009), this protein is Phospho-N-acetylmuramoyl-pentapeptide-transferase.